A 422-amino-acid polypeptide reads, in one-letter code: MAKTIQAIRGMNDCLPTQSPLWQKVEGVVKNVISAYGYSEVRMPIVEMTHLFSRAIGEVTDVVEKEMYTFEDRNGDSLTLRPEGTAGCVRSGIENGLLYNQEQRLWYMGPMFRHERPQKGRYRQFHQCGVEVFGLDGPDVDAELIMMTARLWRELGIAQHVRLELNSIGSLEARANYRTALIDYLEQYQNVLDEDCKRRMYTNPLRVLDSKNPDVQAILGDAPQLSDYLDAESKQHFAGLCELLDAAGIEYTVNQRLVRGLDYYNRTVFEWITESLGSQGTVCGGGRYDGLVEQLGGKPTPAVGFAMGLERLVLMMETLGNTDVRRSVDVYMVTAGEGTMMAGMKLAEQLREQVPGLRVMTHFGGGNFKKQFKRADKVGAAIALVLGEDEVAAQTVVVKDLAGGEQNTVAQAEVAKLLAHLA.

Belongs to the class-II aminoacyl-tRNA synthetase family. In terms of assembly, homodimer.

The protein localises to the cytoplasm. The enzyme catalyses tRNA(His) + L-histidine + ATP = L-histidyl-tRNA(His) + AMP + diphosphate + H(+). The sequence is that of Histidine--tRNA ligase from Vibrio cholerae serotype O1 (strain ATCC 39541 / Classical Ogawa 395 / O395).